Reading from the N-terminus, the 204-residue chain is Holliday junction branch migration complex subunit RuvA (204 aa).

Residues 1 to 64 are domain I; the sequence is MIGRLQGILL…EDAHLLFGFA (64 aa). The tract at residues 65–143 is domain II; that stretch reads QKTDRTLFRE…GVKQSDFFVE (79 aa). A flexible linker region spans residues 144 to 155; the sequence is STHIPLSPSIES. The interval 156–204 is domain III; the sequence is HSESSSDEAISALIALGYKPVEAEKMVKRVAKPELTSEQVIREALKAAL.

Belongs to the RuvA family. Homotetramer. Forms an RuvA(8)-RuvB(12)-Holliday junction (HJ) complex. HJ DNA is sandwiched between 2 RuvA tetramers; dsDNA enters through RuvA and exits via RuvB. An RuvB hexamer assembles on each DNA strand where it exits the tetramer. Each RuvB hexamer is contacted by two RuvA subunits (via domain III) on 2 adjacent RuvB subunits; this complex drives branch migration. In the full resolvosome a probable DNA-RuvA(4)-RuvB(12)-RuvC(2) complex forms which resolves the HJ.

The protein localises to the cytoplasm. In terms of biological role, the RuvA-RuvB-RuvC complex processes Holliday junction (HJ) DNA during genetic recombination and DNA repair, while the RuvA-RuvB complex plays an important role in the rescue of blocked DNA replication forks via replication fork reversal (RFR). RuvA specifically binds to HJ cruciform DNA, conferring on it an open structure. The RuvB hexamer acts as an ATP-dependent pump, pulling dsDNA into and through the RuvAB complex. HJ branch migration allows RuvC to scan DNA until it finds its consensus sequence, where it cleaves and resolves the cruciform DNA. This Haemophilus influenzae (strain PittEE) protein is Holliday junction branch migration complex subunit RuvA.